The sequence spans 172 residues: Putative phosphoesterase BCG9842_B4061 (172 aa).

His34 (proton donor) is an active-site residue. 2 short sequence motifs (HXTX) span residues His34 to Leu37 and His115 to Ile118. His115 acts as the Proton acceptor in catalysis.

This sequence belongs to the 2H phosphoesterase superfamily. YjcG family.

The chain is Putative phosphoesterase BCG9842_B4061 from Bacillus cereus (strain G9842).